Here is a 117-residue protein sequence, read N- to C-terminus: Large ribosomal subunit protein bL20c (117 aa).

Belongs to the bacterial ribosomal protein bL20 family.

It localises to the plastid. The protein resides in the chloroplast. Its function is as follows. Binds directly to 23S ribosomal RNA and is necessary for the in vitro assembly process of the 50S ribosomal subunit. It is not involved in the protein synthesizing functions of that subunit. This is Large ribosomal subunit protein bL20c (rpl20) from Arabidopsis thaliana (Mouse-ear cress).